Consider the following 308-residue polypeptide: Tetraacyldisaccharide 4'-kinase (308 aa).

ATP is bound at residue 63 to 70 (SFGGNGKT).

Belongs to the LpxK family.

The catalysed reaction is a lipid A disaccharide + ATP = a lipid IVA + ADP + H(+). It participates in glycolipid biosynthesis; lipid IV(A) biosynthesis; lipid IV(A) from (3R)-3-hydroxytetradecanoyl-[acyl-carrier-protein] and UDP-N-acetyl-alpha-D-glucosamine: step 6/6. In terms of biological role, transfers the gamma-phosphate of ATP to the 4'-position of a tetraacyldisaccharide 1-phosphate intermediate (termed DS-1-P) to form tetraacyldisaccharide 1,4'-bis-phosphate (lipid IVA). The chain is Tetraacyldisaccharide 4'-kinase from Campylobacter jejuni subsp. jejuni serotype O:6 (strain 81116 / NCTC 11828).